A 160-amino-acid polypeptide reads, in one-letter code: Phosphopantetheine adenylyltransferase (160 aa).

Position 8 (serine 8) interacts with substrate. Residues 8 to 9 (SF) and histidine 16 contribute to the ATP site. The substrate site is built by lysine 40, threonine 72, and arginine 86. ATP is bound by residues 87 to 89 (GLR), glutamate 97, and 122 to 128 (YSFLSSS).

Belongs to the bacterial CoaD family. In terms of assembly, homohexamer. Mg(2+) is required as a cofactor.

Its subcellular location is the cytoplasm. It catalyses the reaction (R)-4'-phosphopantetheine + ATP + H(+) = 3'-dephospho-CoA + diphosphate. Its pathway is cofactor biosynthesis; coenzyme A biosynthesis; CoA from (R)-pantothenate: step 4/5. In terms of biological role, reversibly transfers an adenylyl group from ATP to 4'-phosphopantetheine, yielding dephospho-CoA (dPCoA) and pyrophosphate. The polypeptide is Phosphopantetheine adenylyltransferase (Synechococcus sp. (strain CC9311)).